Reading from the N-terminus, the 167-residue chain is Small ribosomal subunit protein uS5 (167 aa).

An S5 DRBM domain is found at 12–75; sequence LNEKLIAVNR…EKARRNIRDV (64 aa).

It belongs to the universal ribosomal protein uS5 family. As to quaternary structure, part of the 30S ribosomal subunit. Contacts proteins S4 and S8.

Functionally, with S4 and S12 plays an important role in translational accuracy. Its function is as follows. Located at the back of the 30S subunit body where it stabilizes the conformation of the head with respect to the body. The polypeptide is Small ribosomal subunit protein uS5 (Psychromonas ingrahamii (strain DSM 17664 / CCUG 51855 / 37)).